A 249-amino-acid chain; its full sequence is Acetylglutamate kinase (249 aa).

Substrate is bound by residues 38–39 (GG), Arg60, and Asn147.

It belongs to the acetylglutamate kinase family. ArgB subfamily.

Its subcellular location is the cytoplasm. It catalyses the reaction N-acetyl-L-glutamate + ATP = N-acetyl-L-glutamyl 5-phosphate + ADP. The protein operates within amino-acid biosynthesis; L-arginine biosynthesis; N(2)-acetyl-L-ornithine from L-glutamate: step 2/4. In terms of biological role, catalyzes the ATP-dependent phosphorylation of N-acetyl-L-glutamate. This is Acetylglutamate kinase from Deinococcus radiodurans (strain ATCC 13939 / DSM 20539 / JCM 16871 / CCUG 27074 / LMG 4051 / NBRC 15346 / NCIMB 9279 / VKM B-1422 / R1).